Here is a 154-residue protein sequence, read N- to C-terminus: uncharacterized protein (154 aa).

This is an uncharacterized protein from Aquifex aeolicus (strain VF5).